The primary structure comprises 126 residues: UPF0102 protein HD_0802 (126 aa).

The protein belongs to the UPF0102 family.

In Haemophilus ducreyi (strain 35000HP / ATCC 700724), this protein is UPF0102 protein HD_0802.